A 358-amino-acid polypeptide reads, in one-letter code: MDGFSGGIDINIFDSNSTENGSGDFEDFSEPCFMHDNSDFNRIFLPTIYSFIFLLGIIGNGLVVVVMGYQKKSRTMTDKYRLHLSVADLLFVFTLPFWSVDAAIGWYFKEFLCKAVHVIYTVNLYSSVLILAFISLDRYLAIVHATNSQGSRKMLADKVVYAGVWLPALLLTVPDLVFARVSDENGQFVCDRIYPIDNRETWTVGFRFLHITVGLILPGLIILICYCVIISKLSHSKGHQKRKALKTTVILILAFFACWLPYYVCLTTDTFMLLGLLKADCIWENTLHKAISITEALAFFHCCLNPILYAFLGAKFKTSAQNAFTSVSRGSSLKILSKKRAGLSSVSTESESSSFHSS.

Positions 1 to 25 are important for chemokine binding and signaling; the sequence is MDGFSGGIDINIFDSNSTENGSGDF. Topologically, residues 1-44 are extracellular; sequence MDGFSGGIDINIFDSNSTENGSGDFEDFSEPCFMHDNSDFNRIF. Residues Asn16 and Asn20 are each glycosylated (N-linked (GlcNAc...) asparagine). Disulfide bonds link Cys32-Cys281 and Cys113-Cys190. A helical membrane pass occupies residues 45–67; that stretch reads LPTIYSFIFLLGIIGNGLVVVVM. The Cytoplasmic segment spans residues 68 to 81; the sequence is GYQKKSRTMTDKYR. Residues 82-103 traverse the membrane as a helical segment; sequence LHLSVADLLFVFTLPFWSVDAA. Positions 98 to 101 are chemokine binding; the sequence is WSVD. At 104–114 the chain is on the extracellular side; sequence IGWYFKEFLCK. Residues 115 to 134 form a helical membrane-spanning segment; it reads AVHVIYTVNLYSSVLILAFI. Positions 117 to 121 are chemokine binding; the sequence is HVIYT. Topologically, residues 135–158 are cytoplasmic; sequence SLDRYLAIVHATNSQGSRKMLADK. The involved in dimerization; when bound to chemokine stretch occupies residues 139–151; that stretch reads YLAIVHATNSQGS. The chain crosses the membrane as a helical span at residues 159–178; the sequence is VVYAGVWLPALLLTVPDLVF. Residues 179 to 202 are Extracellular-facing; sequence ARVSDENGQFVCDRIYPIDNRETW. The chemokine binding, important for signaling stretch occupies residues 190 to 194; that stretch reads CDRIY. Residues 203-223 form a helical membrane-spanning segment; sequence TVGFRFLHITVGLILPGLIIL. The Cytoplasmic segment spans residues 224–248; that stretch reads ICYCVIISKLSHSKGHQKRKALKTT. Residues 249–268 traverse the membrane as a helical segment; the sequence is VILILAFFACWLPYYVCLTT. At 269-289 the chain is on the extracellular side; the sequence is DTFMLLGLLKADCIWENTLHK. A helical membrane pass occupies residues 290–309; the sequence is AISITEALAFFHCCLNPILY. At 310-358 the chain is on the cytoplasmic side; that stretch reads AFLGAKFKTSAQNAFTSVSRGSSLKILSKKRAGLSSVSTESESSSFHSS. The tract at residues 338 to 358 is disordered; that stretch reads KKRAGLSSVSTESESSSFHSS. Residues 344-358 are compositionally biased toward low complexity; it reads SSVSTESESSSFHSS.

This sequence belongs to the G-protein coupled receptor 1 family. As to quaternary structure, monomer. Can form dimers. Sulfation is required for efficient binding of cxcl12/sdf-1alpha and promotes its dimerization. Post-translationally, O- and N-glycosylated.

The protein localises to the cell membrane. Its subcellular location is the cytoplasm. It localises to the nucleus. It is found in the early endosome. The protein resides in the late endosome. The protein localises to the lysosome. Receptor for the C-X-C chemokine cxcl12/sdf-1. Transduces a signal by increasing the intracellular calcium ion level. Signaling with cxcl12/sdf-1 mediates the directional movement of mesodermal cells during gastrulation. May play a role in the migration of embryonic presumptive primordial germ cells (pPGCs). May also be involved in regulating migration of hematopoietic stem cells into the larval liver. The protein is C-X-C chemokine receptor type 4 of Xenopus tropicalis (Western clawed frog).